Reading from the N-terminus, the 799-residue chain is Ribosome-releasing factor 2, mitochondrial (799 aa).

Positions 19–306 (SKIRNIGIIA…AVVNYLPSPL (288 aa)) constitute a tr-type G domain. GTP-binding positions include 28–35 (AHIDAGKT), 93–97 (DTPGH), and 145–148 (NKMD).

Belongs to the TRAFAC class translation factor GTPase superfamily. Classic translation factor GTPase family. EF-G/EF-2 subfamily.

It is found in the mitochondrion. Mitochondrial GTPase that mediates the disassembly of ribosomes from messenger RNA at the termination of mitochondrial protein biosynthesis. Not involved in the GTP-dependent ribosomal translocation step during translation elongation. This is Ribosome-releasing factor 2, mitochondrial from Vanderwaltozyma polyspora (strain ATCC 22028 / DSM 70294 / BCRC 21397 / CBS 2163 / NBRC 10782 / NRRL Y-8283 / UCD 57-17) (Kluyveromyces polysporus).